The chain runs to 225 residues: Uracil-DNA glycosylase (225 aa).

D65 functions as the Proton acceptor in the catalytic mechanism.

This sequence belongs to the uracil-DNA glycosylase (UDG) superfamily. UNG family.

The protein resides in the cytoplasm. The enzyme catalyses Hydrolyzes single-stranded DNA or mismatched double-stranded DNA and polynucleotides, releasing free uracil.. In terms of biological role, excises uracil residues from the DNA which can arise as a result of misincorporation of dUMP residues by DNA polymerase or due to deamination of cytosine. This is Uracil-DNA glycosylase from Clostridium perfringens (strain 13 / Type A).